Here is a 713-residue protein sequence, read N- to C-terminus: Vacuolar amino acid transporter 4 (713 aa).

The interval methionine 1–glutamine 33 is disordered. The Vacuolar portion of the chain corresponds to methionine 1–asparagine 242. Over residues histidine 21–glutamine 33 the composition is skewed to polar residues. Residue serine 88 is modified to Phosphoserine. The segment at arginine 99–serine 121 is disordered. Phosphoserine is present on residues serine 130 and serine 165. Positions lysine 200–isoleucine 233 are disordered. The segment covering serine 221–glutamine 231 has biased composition (low complexity). The chain crosses the membrane as a helical span at residues phenylalanine 243–isoleucine 263. The Cytoplasmic portion of the chain corresponds to proline 264 to lysine 301. Residues valine 302–phenylalanine 322 traverse the membrane as a helical segment. Topologically, residues histidine 323–glycine 326 are vacuolar. A helical membrane pass occupies residues leucine 327 to isoleucine 347. The Cytoplasmic segment spans residues leucine 348–arginine 373. The chain crosses the membrane as a helical span at residues isoleucine 374–phenylalanine 394. Residues threonine 395 to glycine 410 are Vacuolar-facing. A helical transmembrane segment spans residues valine 411–isoleucine 431. Topologically, residues arginine 432–serine 438 are cytoplasmic. The helical transmembrane segment at leucine 439 to threonine 459 threads the bilayer. Over alanine 460–arginine 483 the chain is Vacuolar. The chain crosses the membrane as a helical span at residues tryptophan 484–valine 504. At glutamine 505–proline 515 the chain is on the cytoplasmic side. A helical membrane pass occupies residues leucine 516–glycine 536. Topologically, residues tyrosine 537 to leucine 561 are vacuolar. A helical membrane pass occupies residues isoleucine 562–isoleucine 582. Residues lysine 583–lysine 621 are Cytoplasmic-facing. A helical transmembrane segment spans residues tryptophan 622–glycine 642. Over serine 643–lysine 648 the chain is Vacuolar. Residues phenylalanine 649–leucine 669 traverse the membrane as a helical segment. Over histidine 670–threonine 692 the chain is Cytoplasmic. The chain crosses the membrane as a helical span at residues isoleucine 693 to phenylalanine 711. The Vacuolar segment spans residues glycine 712–valine 713.

It belongs to the amino acid/polyamine transporter 2 family.

It is found in the vacuole membrane. Its function is as follows. Involved in amino acid efflux from the vacuole to the cytoplasm. Capable of transporting large neutral amino acids including tyrosine, glutamine, asparagine, isoleucine and leucine. The sequence is that of Vacuolar amino acid transporter 4 (AVT4) from Saccharomyces cerevisiae (strain ATCC 204508 / S288c) (Baker's yeast).